The chain runs to 371 residues: MHMQSPIQRRKSRQIHVGHVPVGGDAPIAVQSMTNTDTLDVDATVAQIRQLEAAGADIVRVSVPTMDAAEAFGQIKRQVSVPLVADIHFDYKIALRVAELGVDCLRINPGNIGREDRVRAVVDAARHHGIPIRIGVNAGSLEKDLQKKYGEPTPEALVESAMRHIEHLDRLDFQDFKVSVKASDVFMAVAAYRQLAQRIDQPLHLGITEAGGLRSGTVKSSIGLGLLLMEGIGDTIRVSLAADPVEEIKVGYDMLKSLRLRSKGINFIACPSCSRQNFDVIGTMNALEERLDDIMTPLDVSVIGCVVNGPGEAKESDIGLTGGDPANLVYIDGKPASKLRNDHLVDDLEALIRDKVREKEARERDTIAREA.

[4Fe-4S] cluster is bound by residues cysteine 270, cysteine 273, cysteine 305, and glutamate 312.

Belongs to the IspG family. [4Fe-4S] cluster is required as a cofactor.

The enzyme catalyses (2E)-4-hydroxy-3-methylbut-2-enyl diphosphate + oxidized [flavodoxin] + H2O + 2 H(+) = 2-C-methyl-D-erythritol 2,4-cyclic diphosphate + reduced [flavodoxin]. It functions in the pathway isoprenoid biosynthesis; isopentenyl diphosphate biosynthesis via DXP pathway; isopentenyl diphosphate from 1-deoxy-D-xylulose 5-phosphate: step 5/6. Its function is as follows. Converts 2C-methyl-D-erythritol 2,4-cyclodiphosphate (ME-2,4cPP) into 1-hydroxy-2-methyl-2-(E)-butenyl 4-diphosphate. The protein is 4-hydroxy-3-methylbut-2-en-1-yl diphosphate synthase (flavodoxin) of Chromohalobacter salexigens (strain ATCC BAA-138 / DSM 3043 / CIP 106854 / NCIMB 13768 / 1H11).